A 110-amino-acid chain; its full sequence is Flagellar hook-basal body complex protein FliE (110 aa).

The protein belongs to the FliE family.

The protein localises to the bacterial flagellum basal body. The protein is Flagellar hook-basal body complex protein FliE of Pseudomonas putida (strain GB-1).